A 228-amino-acid chain; its full sequence is Fluoride-specific ion channel FluC (228 aa).

Transmembrane regions (helical) follow at residues 3 to 23 (LSLFAIALGGAAGALARFWVS), 37 to 57 (GTLFINVSGSFLMGFLSVMMI), 72 to 92 (VGFLGAYTTFSTFSLETLALF), 101 to 121 (ALNVLLSVVLCLAAVWVGAVL), 141 to 161 (IFGAACGMSLLAGFAAALAFA), 172 to 192 (LVLVALTGLVVVGTLVALVVT), and 202 to 222 (LWGAFTLSAFAAVVFLSLGLV). Na(+) contacts are provided by G76 and T79.

This sequence belongs to the fluoride channel Fluc/FEX (TC 1.A.43) family.

Its subcellular location is the cell inner membrane. The catalysed reaction is fluoride(in) = fluoride(out). With respect to regulation, na(+) is not transported, but it plays an essential structural role and its presence is essential for fluoride channel function. In terms of biological role, fluoride-specific ion channel. Important for reducing fluoride concentration in the cell, thus reducing its toxicity. This chain is Fluoride-specific ion channel FluC, found in Methylococcus capsulatus (strain ATCC 33009 / NCIMB 11132 / Bath).